We begin with the raw amino-acid sequence, 803 residues long: Leucine--tRNA ligase (803 aa).

The 'HIGH' region motif lies at 40–51 (PYPSGAGLHVGH). Positions 575 to 579 (KMSKS) match the 'KMSKS' region motif. Lysine 578 provides a ligand contact to ATP.

It belongs to the class-I aminoacyl-tRNA synthetase family.

The protein localises to the cytoplasm. The catalysed reaction is tRNA(Leu) + L-leucine + ATP = L-leucyl-tRNA(Leu) + AMP + diphosphate. The chain is Leucine--tRNA ligase from Listeria monocytogenes serotype 4a (strain HCC23).